The following is a 720-amino-acid chain: Polyribonucleotide nucleotidyltransferase (720 aa).

2 residues coordinate Mg(2+): aspartate 484 and aspartate 490. The region spanning 551-610 (PRMYKINIDPSKIGSVIGSGGKTIRSIIEQTNTTVDIENDGTVVIGAIDEASAKKAIKII) is the KH domain. An S1 motif domain is found at 620 to 688 (GSIYTGKVTR…NQGRVNLSHR (69 aa)). The segment at 697–720 (PISRNRDSQPRRPGPFRPSDRSNS) is disordered.

This sequence belongs to the polyribonucleotide nucleotidyltransferase family. Mg(2+) is required as a cofactor.

It localises to the cytoplasm. The enzyme catalyses RNA(n+1) + phosphate = RNA(n) + a ribonucleoside 5'-diphosphate. Its function is as follows. Involved in mRNA degradation. Catalyzes the phosphorolysis of single-stranded polyribonucleotides processively in the 3'- to 5'-direction. The polypeptide is Polyribonucleotide nucleotidyltransferase (Dehalococcoides mccartyi (strain ATCC BAA-2100 / JCM 16839 / KCTC 5957 / BAV1)).